The chain runs to 598 residues: UvrABC system protein C (598 aa).

Residues 14–91 form the GIY-YIG domain; the sequence is DSPGCYLHKD…IQKNMPKYNI (78 aa). The 36-residue stretch at 196–231 folds into the UVR domain; that stretch reads DKIIEDLRSKMLAASEEMAFERAAEYRDLISGIATM.

It belongs to the UvrC family. Interacts with UvrB in an incision complex.

The protein localises to the cytoplasm. The UvrABC repair system catalyzes the recognition and processing of DNA lesions. UvrC both incises the 5' and 3' sides of the lesion. The N-terminal half is responsible for the 3' incision and the C-terminal half is responsible for the 5' incision. The protein is UvrABC system protein C of Streptococcus pyogenes serotype M12 (strain MGAS2096).